A 211-amino-acid polypeptide reads, in one-letter code: Putative F-box protein At1g52490 (211 aa).

The 48-residue stretch at 12-59 (EEEYLQLPLDLIVEILKKLPLKSLVRFRCVSKQFSTIICSLRDFIESV) folds into the F-box domain.

This is Putative F-box protein At1g52490 from Arabidopsis thaliana (Mouse-ear cress).